Consider the following 565-residue polypeptide: NAD-dependent malic enzyme (565 aa).

Residue Tyr104 is the Proton donor of the active site. Residue Arg157 participates in NAD(+) binding. The active-site Proton acceptor is Lys175. A divalent metal cation is bound by residues Glu246, Asp247, and Asp270. NAD(+)-binding residues include Asp270 and Asn418.

The protein belongs to the malic enzymes family. Homotetramer. Mg(2+) serves as cofactor. It depends on Mn(2+) as a cofactor.

The enzyme catalyses (S)-malate + NAD(+) = pyruvate + CO2 + NADH. The catalysed reaction is oxaloacetate + H(+) = pyruvate + CO2. The protein is NAD-dependent malic enzyme of Proteus mirabilis (strain HI4320).